The sequence spans 178 residues: MSEVRLPPLRALDDFVLGSARLAAPDPCDPQRWCHRVINNLLYYQTNYLLCFGIGLALAGYVRPLHTLLSALVVAVALGVLVWAAETRAAVRRCRRSHPAACLAAVLAVGLLVLWVAGGACTFLFSIAGPVLLILVHASLRLRNLKNKIENKIESIGLKRTPMGLLLEALGQEQEAGS.

Topologically, residues 1 to 41 (MSEVRLPPLRALDDFVLGSARLAAPDPCDPQRWCHRVINNL) are cytoplasmic. A helical membrane pass occupies residues 42–62 (LYYQTNYLLCFGIGLALAGYV). Over 63-64 (RP) the chain is Extracellular. The chain crosses the membrane as a helical span at residues 65–85 (LHTLLSALVVAVALGVLVWAA). Residues 86 to 96 (ETRAAVRRCRR) are Cytoplasmic-facing. Residues 97 to 119 (SHPAACLAAVLAVGLLVLWVAGG) traverse the membrane as a helical segment. Over 120 to 122 (ACT) the chain is Extracellular. Residues 123-140 (FLFSIAGPVLLILVHASL) form a helical membrane-spanning segment. The Cytoplasmic portion of the chain corresponds to 141 to 178 (RLRNLKNKIENKIESIGLKRTPMGLLLEALGQEQEAGS).

It belongs to the PRA1 family. As to quaternary structure, interacts with CCR5 and GDE1. As to expression, strong expression in the brain, small intestine, lung, spleen, and pancreas as well as in tumor tissues of the breast, colon, lung and ovary, with a weaker expression in normal tissues of the same patient. High expression in neuroblastic tumors. Strongly expressed in Purkinje cells and more moderately in cells of the molecular and the granular layers in the cerebellum. Detected in neuronal cells, but not in non-neuronal cells in the cerebral cortex, hippocampus, and lateral ventricles.

The protein localises to the endosome membrane. Functionally, may be involved in ER/Golgi transport and vesicular traffic. Plays a proapoptotic role in cerulenin-induced neuroblastoma apoptosis. The sequence is that of PRA1 family protein 2 (PRAF2) from Homo sapiens (Human).